The sequence spans 255 residues: Biotin carboxyl carrier protein of acetyl-CoA carboxylase 2, chloroplastic (255 aa).

The N-terminal 87 residues, 1-87, are a transit peptide targeting the chloroplast; sequence MASLSVPCVK…TNVPEPAELS (87 aa). Positions 148–193 are disordered; sequence PPAQPVALPPSPTPTSTPATAKPTSAPSSSHPPLKSPMAGTFYRSP. The segment covering 149–162 has biased composition (pro residues); sequence PAQPVALPPSPTPT. A compositionally biased stretch (low complexity) spans 163–180; sequence STPATAKPTSAPSSSHPP. The Biotinyl-binding domain maps to 178–254; sequence HPPLKSPMAG…SVDTPLFVIA (77 aa). Position 220 is an N6-biotinyllysine (lysine 220).

As to quaternary structure, acetyl-CoA carboxylase is a heterohexamer composed of biotin carboxyl carrier protein, biotin carboxylase and 2 subunits each of ACCase subunit alpha and ACCase plastid-coded subunit beta (accD). In terms of tissue distribution, primarily expressed in 7 to 10 days after flowering seeds at levels approximately 2-fold less abundant than BCCP1.

Its subcellular location is the plastid. It localises to the chloroplast. Its pathway is lipid metabolism; fatty acid biosynthesis. In terms of biological role, this protein is a component of the acetyl coenzyme A carboxylase complex; first, biotin carboxylase catalyzes the carboxylation of the carrier protein and then the transcarboxylase transfers the carboxyl group to form malonyl-CoA. This chain is Biotin carboxyl carrier protein of acetyl-CoA carboxylase 2, chloroplastic (BCCP2), found in Arabidopsis thaliana (Mouse-ear cress).